The chain runs to 1121 residues: Cilia- and flagella-associated protein 70 (1121 aa).

Positions asparagine 410 to proline 428 are enriched in basic and acidic residues. The segment at asparagine 410–glycine 457 is disordered. TPR repeat units follow at residues serine 635–asparagine 668, leucine 669–histidine 702, and histidine 704–asparagine 736. Disordered regions lie at residues lysine 778 to isoleucine 802 and glutamine 836 to serine 858. 5 TPR repeats span residues cysteine 929 to asparagine 962, proline 963 to alanine 996, histidine 1000 to cysteine 1033, threonine 1035 to asparagine 1066, and glutamate 1068 to aspartate 1100.

It belongs to the CFAP70 family. Expressed in testis.

It is found in the cell projection. Its subcellular location is the cilium. The protein resides in the flagellum. The protein localises to the cytoplasm. It localises to the cytoskeleton. It is found in the flagellum basal body. Its subcellular location is the cilium axoneme. In terms of biological role, axoneme-binding protein that plays a role in the regulation of ciliary motility and cilium length. The chain is Cilia- and flagella-associated protein 70 from Homo sapiens (Human).